The following is a 122-amino-acid chain: Selenoprotein H (122 aa).

The residue at position 20 (Lys-20) is an N6-acetyllysine. A cross-link (cysteinyl-selenocysteine (Cys-Sec); redox-active) is located at residues 41 to 44 (CTSU). Sec-44 is a non-standard amino acid (selenocysteine).

Belongs to the SelWTH family.

Functionally, may be involved in a redox-related process. In Homo sapiens (Human), this protein is Selenoprotein H.